We begin with the raw amino-acid sequence, 353 residues long: MMSTLSYTLGQLAAHVGAQVRGDADLPIQGLATLQEAGPAHLSFLANPQYRKYLPESRAGAVLLTAADADGFAGTALVVANPYLAYASLSHLFDRKPRAAAGIHPTAIVAADAEVDPSASVGAYAVIESGARIGAGVSIGAHCVIGARSVIGEGGWLAPRVTLYHDVNIGARVSIQSGAVIGGEGFGFANEKGVWQKIAQIGGVTIGDDVEIGANTTIDRGALSDTLIGNGVKLDNQIMIAHNVQIGDHTAMAACVGISGSAKIGRHCMLAGGVGLVGHIEICDNVFVTGMTMVTRSITEPGSYSSGTAMQPAAEWKKSAARIRQLDDMARRLQQLEKRLAAVTSSGDASSDA.

The active-site Proton acceptor is His-242.

It belongs to the transferase hexapeptide repeat family. LpxD subfamily. Homotrimer.

It carries out the reaction a UDP-3-O-[(3R)-3-hydroxyacyl]-alpha-D-glucosamine + a (3R)-hydroxyacyl-[ACP] = a UDP-2-N,3-O-bis[(3R)-3-hydroxyacyl]-alpha-D-glucosamine + holo-[ACP] + H(+). The protein operates within bacterial outer membrane biogenesis; LPS lipid A biosynthesis. Its function is as follows. Catalyzes the N-acylation of UDP-3-O-acylglucosamine using 3-hydroxyacyl-ACP as the acyl donor. Is involved in the biosynthesis of lipid A, a phosphorylated glycolipid that anchors the lipopolysaccharide to the outer membrane of the cell. In Pseudomonas paraeruginosa (strain DSM 24068 / PA7) (Pseudomonas aeruginosa (strain PA7)), this protein is UDP-3-O-acylglucosamine N-acyltransferase.